The chain runs to 1007 residues: Zinc finger CCCH domain-containing protein 4 (1007 aa).

Residues 28–192 (VEKVKGNRVT…FRDLGRGERV (165 aa)) enclose the Helicase ATP-binding domain. Position 41-48 (41-48 (GDTGCGKS)) interacts with ATP. A DEAH box motif is present at residues 139 to 142 (DEIH). Positions 250–420 (LIHRLLLHIH…EQVLMICCAE (171 aa)) constitute a Helicase C-terminal domain. 2 consecutive C3H1-type zinc fingers follow at residues 723 to 750 (ALEN…HSSR) and 751 to 778 (APRP…HDSG).

This chain is Zinc finger CCCH domain-containing protein 4, found in Oryza sativa subsp. japonica (Rice).